The primary structure comprises 378 residues: Chorismate synthase (378 aa).

NADP(+) is bound by residues Arg48 and Arg54. Residues 125–127 (RSS), 238–239 (NA), Gly278, 293–297 (KPTSS), and Arg319 contribute to the FMN site.

The protein belongs to the chorismate synthase family. Homotetramer. FMNH2 is required as a cofactor.

The enzyme catalyses 5-O-(1-carboxyvinyl)-3-phosphoshikimate = chorismate + phosphate. The protein operates within metabolic intermediate biosynthesis; chorismate biosynthesis; chorismate from D-erythrose 4-phosphate and phosphoenolpyruvate: step 7/7. Its function is as follows. Catalyzes the anti-1,4-elimination of the C-3 phosphate and the C-6 proR hydrogen from 5-enolpyruvylshikimate-3-phosphate (EPSP) to yield chorismate, which is the branch point compound that serves as the starting substrate for the three terminal pathways of aromatic amino acid biosynthesis. This reaction introduces a second double bond into the aromatic ring system. The chain is Chorismate synthase from Azoarcus sp. (strain BH72).